Here is a 396-residue protein sequence, read N- to C-terminus: Elongation factor Tu 1 (396 aa).

The tr-type G domain maps to 10 to 206 (KLHVNVGTIG…ALDTFIPDPT (197 aa)). Positions 19–26 (GHVDHGKT) are G1. Residue 19 to 26 (GHVDHGKT) participates in GTP binding. Position 26 (Thr-26) interacts with Mg(2+). Residues 60-64 (GITIS) form a G2 region. The interval 81–84 (DCPG) is G3. GTP-binding positions include 81–85 (DCPGH) and 136–139 (NKAD). The G4 stretch occupies residues 136-139 (NKAD). Residues 174–176 (SAR) are G5.

It belongs to the TRAFAC class translation factor GTPase superfamily. Classic translation factor GTPase family. EF-Tu/EF-1A subfamily. In terms of assembly, monomer.

The protein resides in the cytoplasm. The enzyme catalyses GTP + H2O = GDP + phosphate + H(+). In terms of biological role, GTP hydrolase that promotes the GTP-dependent binding of aminoacyl-tRNA to the A-site of ribosomes during protein biosynthesis. This is Elongation factor Tu 1 from Xanthomonas campestris pv. campestris (strain B100).